The following is a 988-amino-acid chain: UPF0182 protein MAB_3498c (988 aa).

Transmembrane regions (helical) follow at residues Leu19–Thr39, Leu63–Leu83, Leu114–Tyr134, Phe176–Ile196, Ile211–Asp231, Lys260–Leu280, and Ile288–Val308.

The protein belongs to the UPF0182 family.

The protein localises to the cell membrane. The sequence is that of UPF0182 protein MAB_3498c from Mycobacteroides abscessus (strain ATCC 19977 / DSM 44196 / CCUG 20993 / CIP 104536 / JCM 13569 / NCTC 13031 / TMC 1543 / L948) (Mycobacterium abscessus).